Here is a 365-residue protein sequence, read N- to C-terminus: Neuronal migration protein doublecortin (365 aa).

The segment at 11-31 (RDKTSRNMRGSRMNGLPSPTH) is disordered. The residue at position 14 (T14) is a Phosphothreonine; by PKC. The residue at position 28 (S28) is a Phosphoserine; by CDK5. Residue S47 is modified to Phosphoserine; by MARK1 and PKA. 2 Doublecortin domains span residues 53 to 139 (KKVR…VEYT) and 180 to 263 (KLVT…AQDD). Y70 bears the Phosphotyrosine; by ABL mark. S74 carries the phosphoserine; by PKC modification. The residue at position 90 (S90) is a Phosphoserine; by CK2. A Phosphoserine; by PKC modification is found at S110. A Phosphoserine; by CK2, MARK1 and PKA modification is found at S115. S265 bears the Phosphoserine; by CK2 mark. The segment at 275 to 365 (KGNPSATAGP…DDSDSLGDSM (91 aa)) is disordered. S287 carries the phosphoserine; by CDK5 modification. Phosphothreonine; by CDK5 is present on T289. S294 is modified (phosphoserine; by PKC). S297 is modified (phosphoserine; by CDK5). The residue at position 306 (S306) is a Phosphoserine; by CK2. The residue at position 306 (S306) is a Phosphoserine; by DYRK2. Residues 307-341 (PADSGNDQDANGTSSSQLSTPKSKQSPISTPTSPG) show a composition bias toward polar residues. Phosphothreonine; by CDK5 is present on T326. At T326 the chain carries Phosphothreonine; by PKC and MAPK. Phosphoserine; by CDK5 is present on S332. S332 carries the post-translational modification Phosphoserine; by MAPK. T336 carries the post-translational modification Phosphothreonine; by MAPK. S339 bears the Phosphoserine; by CDK5 mark. S339 is modified (phosphoserine; by MAPK). At S342 the chain carries Phosphoserine; by PKC. Residues S354 and S360 each carry the phosphoserine; by CK2 modification. Residues 356–365 (DDSDSLGDSM) show a composition bias toward acidic residues.

In terms of assembly, interacts with tubulin. Interacts with USP9X. Phosphorylation by MARK1, MARK2 and PKA regulates its ability to bind microtubules. Phosphorylation at Ser-265 and Ser-297 seems to occur only in neonatal brain, the levels falling precipitously by postnatal day 21. In terms of processing, ubiquitinated by MDM2, leading to its degradation by the proteasome. Ubiquitinated by MDM2 and subsequent degradation leads to reduce the dendritic spine density of olfactory bulb granule cells. Highly expressed in neuronal cells of fetal brain (in the majority of cells of the cortical plate, intermediate zone and ventricular zone), but not expressed in other fetal tissues. In the adult, highly expressed in the brain frontal lobe, but very low expression in other regions of brain, and not detected in heart, placenta, lung, liver, skeletal muscles, kidney and pancreas.

The protein localises to the cytoplasm. The protein resides in the cell projection. It localises to the neuron projection. In terms of biological role, microtubule-associated protein required for initial steps of neuronal dispersion and cortex lamination during cerebral cortex development. May act by competing with the putative neuronal protein kinase DCLK1 in binding to a target protein. May in that way participate in a signaling pathway that is crucial for neuronal interaction before and during migration, possibly as part of a calcium ion-dependent signal transduction pathway. May be part with PAFAH1B1/LIS-1 of overlapping, but distinct, signaling pathways that promote neuronal migration. This chain is Neuronal migration protein doublecortin (DCX), found in Homo sapiens (Human).